We begin with the raw amino-acid sequence, 61 residues long: Putative antitoxin APE_0472b.1 (61 aa).

This sequence belongs to the UPF0165 family.

Functionally, possibly the antitoxin component of a type II toxin-antitoxin (TA) system. This Aeropyrum pernix (strain ATCC 700893 / DSM 11879 / JCM 9820 / NBRC 100138 / K1) protein is Putative antitoxin APE_0472b.1.